The sequence spans 597 residues: Elongation factor 4 (597 aa).

One can recognise a tr-type G domain in the interval glutamine 2–lysine 184. GTP is bound by residues aspartate 14–threonine 19 and asparagine 131–aspartate 134.

It belongs to the TRAFAC class translation factor GTPase superfamily. Classic translation factor GTPase family. LepA subfamily.

The protein resides in the cell inner membrane. The enzyme catalyses GTP + H2O = GDP + phosphate + H(+). Its function is as follows. Required for accurate and efficient protein synthesis under certain stress conditions. May act as a fidelity factor of the translation reaction, by catalyzing a one-codon backward translocation of tRNAs on improperly translocated ribosomes. Back-translocation proceeds from a post-translocation (POST) complex to a pre-translocation (PRE) complex, thus giving elongation factor G a second chance to translocate the tRNAs correctly. Binds to ribosomes in a GTP-dependent manner. This chain is Elongation factor 4, found in Nitrosospira multiformis (strain ATCC 25196 / NCIMB 11849 / C 71).